Consider the following 189-residue polypeptide: Peptidyl-tRNA hydrolase (189 aa).

Tyrosine 15 serves as a coordination point for tRNA. Histidine 20 acts as the Proton acceptor in catalysis. The tRNA site is built by phenylalanine 66, asparagine 68, and asparagine 114.

The protein belongs to the PTH family. Monomer.

It localises to the cytoplasm. The catalysed reaction is an N-acyl-L-alpha-aminoacyl-tRNA + H2O = an N-acyl-L-amino acid + a tRNA + H(+). In terms of biological role, hydrolyzes ribosome-free peptidyl-tRNAs (with 1 or more amino acids incorporated), which drop off the ribosome during protein synthesis, or as a result of ribosome stalling. Functionally, catalyzes the release of premature peptidyl moieties from peptidyl-tRNA molecules trapped in stalled 50S ribosomal subunits, and thus maintains levels of free tRNAs and 50S ribosomes. The chain is Peptidyl-tRNA hydrolase from Acidithiobacillus ferrooxidans (strain ATCC 23270 / DSM 14882 / CIP 104768 / NCIMB 8455) (Ferrobacillus ferrooxidans (strain ATCC 23270)).